The following is a 367-amino-acid chain: Peptide chain release factor 2 (367 aa).

The residue at position 254 (Gln-254) is an N5-methylglutamine.

This sequence belongs to the prokaryotic/mitochondrial release factor family. In terms of processing, methylated by PrmC. Methylation increases the termination efficiency of RF2.

The protein resides in the cytoplasm. In terms of biological role, peptide chain release factor 2 directs the termination of translation in response to the peptide chain termination codons UGA and UAA. This chain is Peptide chain release factor 2, found in Bordetella bronchiseptica (strain ATCC BAA-588 / NCTC 13252 / RB50) (Alcaligenes bronchisepticus).